The primary structure comprises 55 residues: uncharacterized protein (55 aa).

The helical transmembrane segment at I27–F47 threads the bilayer.

It is found in the membrane. This is an uncharacterized protein from Acheta domesticus (House cricket).